The sequence spans 244 residues: MTAVVNIAAYKFVSIANPADLREPMLEQAGQRQLKGTVLLAPEGINLFLAGAADAIEGFLRWLRADARFADLQAKYSESARMPFRKLLVKVKREIIRMDHPAIRPEAGRAPAVDAATLRRWLAQGRDDQGRELVMLDTRNAFEVEVGTFRGALDWRIERFTQFPQAVRDNQAALAGKTVVSFCTGGIRCEKAAIYMAEAGIEHVYQLEGGILKYFEETDGAGFDGACFVFDERVALDAALAPQA.

A Rhodanese domain is found at 129–219 (QGRELVMLDT…GILKYFEETD (91 aa)). Residue Cys183 is the Cysteine persulfide intermediate of the active site.

This sequence belongs to the TrhO family.

It carries out the reaction uridine(34) in tRNA + AH2 + O2 = 5-hydroxyuridine(34) in tRNA + A + H2O. Functionally, catalyzes oxygen-dependent 5-hydroxyuridine (ho5U) modification at position 34 in tRNAs. This is tRNA uridine(34) hydroxylase from Bordetella bronchiseptica (strain ATCC BAA-588 / NCTC 13252 / RB50) (Alcaligenes bronchisepticus).